Here is a 327-residue protein sequence, read N- to C-terminus: GMP reductase (327 aa).

C176 serves as the catalytic Thioimidate intermediate. I205–V228 serves as a coordination point for NADP(+).

The protein belongs to the IMPDH/GMPR family. GuaC type 2 subfamily.

It carries out the reaction IMP + NH4(+) + NADP(+) = GMP + NADPH + 2 H(+). Functionally, catalyzes the irreversible NADPH-dependent deamination of GMP to IMP. It functions in the conversion of nucleobase, nucleoside and nucleotide derivatives of G to A nucleotides, and in maintaining the intracellular balance of A and G nucleotides. The chain is GMP reductase from Streptococcus pyogenes serotype M28 (strain MGAS6180).